A 245-amino-acid polypeptide reads, in one-letter code: MKFLHIGLMTLMAGVSNVLAQEEANAEDVMVNIEGQDMTMEEAEAYMAAKEKMGGAQQQREMINLQVNYDLLEEPFADLQDFIVFEVGETATLNYTIHNLDQEETYSIVGVSGAVLSEVDQRNVANLTETNITEIVLAPNATGTLRHKIDMNLTEGRYYILPLLHVKDKNEVKRVMSNTFKLDLINQSISIFDPSFLSIIAVLIALVGGTVYLYSNVVAPPKKIKKKEAIPAKIDESWLPDVHKK.

Positions M1–A20 are cleaved as a signal peptide. The Lumenal segment spans residues Q21–S188. A helical membrane pass occupies residues I189–G209. Topologically, residues T210 to K245 are cytoplasmic.

This sequence belongs to the IRC22 family.

The protein resides in the endoplasmic reticulum membrane. Its function is as follows. Is probably involved in a pathway contributing to genomic integrity. The protein is Increased recombination centers protein 22 (IRC22) of Candida glabrata (strain ATCC 2001 / BCRC 20586 / JCM 3761 / NBRC 0622 / NRRL Y-65 / CBS 138) (Yeast).